A 446-amino-acid chain; its full sequence is tRNA(Ile2) 2-agmatinylcytidine synthetase TiaS (446 aa).

This sequence belongs to the TiaS family.

The protein resides in the cytoplasm. It carries out the reaction cytidine(34) in tRNA(Ile2) + agmatine + ATP + H2O = 2-agmatinylcytidine(34) in tRNA(Ile2) + AMP + 2 phosphate + 2 H(+). Functionally, ATP-dependent agmatine transferase that catalyzes the formation of 2-agmatinylcytidine (agm2C) at the wobble position (C34) of tRNA(Ile2), converting the codon specificity from AUG to AUA. This is tRNA(Ile2) 2-agmatinylcytidine synthetase TiaS from Cenarchaeum symbiosum (strain A).